The following is a 109-amino-acid chain: UPF0122 protein BH2485 (109 aa).

This sequence belongs to the UPF0122 family.

In terms of biological role, might take part in the signal recognition particle (SRP) pathway. This is inferred from the conservation of its genetic proximity to ftsY/ffh. May be a regulatory protein. The polypeptide is UPF0122 protein BH2485 (Halalkalibacterium halodurans (strain ATCC BAA-125 / DSM 18197 / FERM 7344 / JCM 9153 / C-125) (Bacillus halodurans)).